The following is a 242-amino-acid chain: Aspartate/glutamate leucyltransferase (242 aa).

This sequence belongs to the R-transferase family. Bpt subfamily.

It is found in the cytoplasm. It carries out the reaction N-terminal L-glutamyl-[protein] + L-leucyl-tRNA(Leu) = N-terminal L-leucyl-L-glutamyl-[protein] + tRNA(Leu) + H(+). The catalysed reaction is N-terminal L-aspartyl-[protein] + L-leucyl-tRNA(Leu) = N-terminal L-leucyl-L-aspartyl-[protein] + tRNA(Leu) + H(+). Its function is as follows. Functions in the N-end rule pathway of protein degradation where it conjugates Leu from its aminoacyl-tRNA to the N-termini of proteins containing an N-terminal aspartate or glutamate. The chain is Aspartate/glutamate leucyltransferase from Chromobacterium violaceum (strain ATCC 12472 / DSM 30191 / JCM 1249 / CCUG 213 / NBRC 12614 / NCIMB 9131 / NCTC 9757 / MK).